The chain runs to 56 residues: Large ribosomal subunit protein eL37 (56 aa).

4 residues coordinate Zn(2+): Cys-19, Cys-22, Cys-34, and Cys-37. The C4-type zinc-finger motif lies at 19–37 (CRRCGRLSYNFNRKTCVAC).

It belongs to the eukaryotic ribosomal protein eL37 family. Zn(2+) is required as a cofactor.

Its function is as follows. Binds to the 23S rRNA. This is Large ribosomal subunit protein eL37 from Methanothrix thermoacetophila (strain DSM 6194 / JCM 14653 / NBRC 101360 / PT) (Methanosaeta thermophila).